The following is a 314-amino-acid chain: Olfactory receptor 8D4 (314 aa).

Over 1-25 (MGVKNHSTVTEFLLSGLTEQAELQL) the chain is Extracellular. An N-linked (GlcNAc...) asparagine glycan is attached at Asn5. Residues 26–46 (PLFCLFLGIYTVTVVGNLSMI) form a helical membrane-spanning segment. The Cytoplasmic portion of the chain corresponds to 47 to 54 (SIIRLNRQ). Residues 55 to 75 (LHTPMYYFLSSLSFLDFCYSS) traverse the membrane as a helical segment. Residues 76-99 (VITPKMLSGFLCRDRSISYSGCMI) lie on the Extracellular side of the membrane. A disulfide bridge connects residues Cys97 and Cys189. Residues 100–120 (QLFFFCVCVISECYMLAAMAC) traverse the membrane as a helical segment. The Cytoplasmic segment spans residues 121–139 (DRYVAICSPLLYRVIMSPR). The helical transmembrane segment at 140 to 160 (VCSLLVAAVFSVGFTDAVIHG) threads the bilayer. Topologically, residues 161 to 197 (GCILRLSFCGSNIIKHYFCDIVPLIKLSCSSTYIDEL) are extracellular. The chain crosses the membrane as a helical span at residues 198–217 (LIFVIGGFNMVATSLTIIIS). Residues 218–237 (YAFILTSILRIHSKKGRCKA) lie on the Cytoplasmic side of the membrane. The chain crosses the membrane as a helical span at residues 238–258 (FSTCSSHLTAVLMFYGSLMSM). At 259 to 271 (YLKPASSSSLTQE) the chain is on the extracellular side. Residues 272–292 (KVSSVFYTTVILMLNPLIYSL) form a helical membrane-spanning segment. Residues 293-314 (RNNEVRNALMKLLRRKISLSPG) lie on the Cytoplasmic side of the membrane.

It belongs to the G-protein coupled receptor 1 family.

Its subcellular location is the cell membrane. Its function is as follows. Odorant receptor. The chain is Olfactory receptor 8D4 (OR8D4) from Homo sapiens (Human).